Consider the following 606-residue polypeptide: Chaperone protein DnaK (606 aa).

Threonine 174 is modified (phosphothreonine; by autocatalysis). Positions 579–593 (ASAAGNPGQGQTNEN) are enriched in polar residues. The tract at residues 579–606 (ASAAGNPGQGQTNENPGGKTIDGDYKVN) is disordered.

It belongs to the heat shock protein 70 family.

Its function is as follows. Acts as a chaperone. This chain is Chaperone protein DnaK, found in Dictyoglomus thermophilum (strain ATCC 35947 / DSM 3960 / H-6-12).